The following is a 371-amino-acid chain: tRNA-specific 2-thiouridylase MnmA (371 aa).

Residues 7–14 (GLSGGVDS) and M33 each bind ATP. The tract at residues 103–105 (NPD) is interaction with target base in tRNA. C108 serves as the catalytic Nucleophile. C108 and C201 are oxidised to a cystine. ATP is bound at residue G133. Residues 151–153 (KDQ) are interaction with tRNA. Catalysis depends on C201, which acts as the Cysteine persulfide intermediate. Positions 308–309 (RY) are interaction with tRNA.

It belongs to the MnmA/TRMU family.

The protein resides in the cytoplasm. It carries out the reaction S-sulfanyl-L-cysteinyl-[protein] + uridine(34) in tRNA + AH2 + ATP = 2-thiouridine(34) in tRNA + L-cysteinyl-[protein] + A + AMP + diphosphate + H(+). In terms of biological role, catalyzes the 2-thiolation of uridine at the wobble position (U34) of tRNA, leading to the formation of s(2)U34. In Mycoplasmopsis pulmonis (strain UAB CTIP) (Mycoplasma pulmonis), this protein is tRNA-specific 2-thiouridylase MnmA.